The sequence spans 491 residues: Iota-carrageenase (491 aa).

The N-terminal stretch at 1–19 (MKLQFKPVYLASIAIMAIG) is a signal peptide. The cysteines at positions 422 and 490 are disulfide-linked.

This sequence belongs to the glycosyl hydrolase 82 family.

It localises to the secreted. It catalyses the reaction Endohydrolysis of 1,4-beta-D-linkages between D-galactose 4-sulfate and 3,6-anhydro-D-galactose-2-sulfate in iota-carrageenans.. Hydrolyzes iota-carrageenans, sulfated 1,3-alpha-1,4-beta galactans from red algal cell walls, with an inversion of anomeric configuration. Also active against hybrid iota-/nu-carrageenan, not active against kappa- or lambda-carrageenans. This Zobellia galactanivorans (strain DSM 12802 / CCUG 47099 / CIP 106680 / NCIMB 13871 / Dsij) protein is Iota-carrageenase.